The chain runs to 20 residues: Collagenolytic protease 28 kDa (20 aa).

The Peptidase S1 domain occupies 1–20; it reads IVGGQEASPGSWPXQVGLFF.

Belongs to the peptidase S1 family.

It catalyses the reaction Hydrolysis of proteins, with broad specificity for peptide bonds. Native collagen is cleaved about 75% of the length of the molecule from the N-terminus. Low activity on small molecule substrates of both trypsin and chymotrypsin.. Functionally, this enzyme is a serine protease capable of degrading the native triple helix of collagen. This chain is Collagenolytic protease 28 kDa, found in Paralithodes camtschaticus (Red king crab).